Consider the following 281-residue polypeptide: Microtubule-associated protein RP/EB family member 3 (281 aa).

The region spanning 14–116 is the Calponin-homology (CH) domain; it reads NLSRHDMLAW…FIQWFKKFFD (103 aa). The interval 157 to 181 is disordered; the sequence is VPQRTSPTGPKNMQTSGRLSNVAPP. Over residues 158–175 the composition is skewed to polar residues; that stretch reads PQRTSPTGPKNMQTSGRL. 2 positions are modified to phosphoserine: serine 162 and serine 176. Residues 194 to 264 enclose the EB1 C-terminal domain; the sequence is GGHETDAQIL…LYATEEGFAP (71 aa). Positions 217 to 260 are APC-binding; the sequence is DGLEKERDFYFSKLRDIELICQEHESENSPVISGIIGILYATEE. The tract at residues 217-281 is DCTN1-binding; the sequence is DGLEKERDFY…EHQQEDQDEY (65 aa). Residues 261 to 281 form a disordered region; sequence GFAPPEDDEIEEHQQEDQDEY. The span at 272 to 281 shows a compositional bias: basic and acidic residues; that stretch reads EHQQEDQDEY.

Belongs to the MAPRE family. In terms of assembly, homodimer. Heterodimer with MAPRE1. Binds monomeric and polymerized GTP-bound tubulin. Interacts with APC2. Interacts with DCTN1 and SRCIN1. Binds to the C-terminal domain of APC. Interacts (via C-terminus) with CLIP1. Interacts with SLAIN2 and SLAIN1. Interacts with AKAP9. Interacts with PDE4DIP. Interacts with PDE4DIP isoform 13/MMG8/SMYLE; this interaction is required for its recruitment to the Golgi apparatus. Predominantly expressed in brain and muscle.

It is found in the cytoplasm. The protein localises to the cytoskeleton. Its function is as follows. Plus-end tracking protein (+TIP) that binds to the plus-end of microtubules and regulates the dynamics of the microtubule cytoskeleton. Promotes microtubule growth. May be involved in spindle function by stabilizing microtubules and anchoring them at centrosomes. Also acts as a regulator of minus-end microtubule organization: interacts with the complex formed by AKAP9 and PDE4DIP, leading to recruit CAMSAP2 to the Golgi apparatus, thereby tethering non-centrosomal minus-end microtubules to the Golgi, an important step for polarized cell movement. Promotes elongation of CAMSAP2-decorated microtubule stretches on the minus-end of microtubules. This is Microtubule-associated protein RP/EB family member 3 (MAPRE3) from Homo sapiens (Human).